Here is a 289-residue protein sequence, read N- to C-terminus: Acetylglutamate kinase (289 aa).

Substrate contacts are provided by residues 65–66 (GG), arginine 87, and asparagine 187.

Belongs to the acetylglutamate kinase family. ArgB subfamily.

The protein localises to the cytoplasm. The catalysed reaction is N-acetyl-L-glutamate + ATP = N-acetyl-L-glutamyl 5-phosphate + ADP. It functions in the pathway amino-acid biosynthesis; L-arginine biosynthesis; N(2)-acetyl-L-ornithine from L-glutamate: step 2/4. Its function is as follows. Catalyzes the ATP-dependent phosphorylation of N-acetyl-L-glutamate. This Chromobacterium violaceum (strain ATCC 12472 / DSM 30191 / JCM 1249 / CCUG 213 / NBRC 12614 / NCIMB 9131 / NCTC 9757 / MK) protein is Acetylglutamate kinase.